The sequence spans 122 residues: Large ribosomal subunit protein uL14 (122 aa).

The protein belongs to the universal ribosomal protein uL14 family. Part of the 50S ribosomal subunit. Forms a cluster with proteins L3 and L19. In the 70S ribosome, L14 and L19 interact and together make contacts with the 16S rRNA in bridges B5 and B8.

Its function is as follows. Binds to 23S rRNA. Forms part of two intersubunit bridges in the 70S ribosome. The protein is Large ribosomal subunit protein uL14 of Dechloromonas aromatica (strain RCB).